We begin with the raw amino-acid sequence, 602 residues long: Leucine-rich repeat-containing protein 40 (602 aa).

The interval 1–22 (MSRLKRIAGQDPRAGFKEGGRD) is disordered. Phosphoserine is present on S71. 20 LRR repeats span residues 83–104 (DLTK…LRLL), 106–127 (ALTV…IREL), 129–150 (NLQK…ITNL), 152–173 (NLKC…FEQF), 175–196 (NLED…FSSL), 198–219 (SLVR…INRM), 221–242 (RLKH…LAGM), 244–265 (SLEL…PSCS), 266–286 (LLKE…EHLK), 290–311 (SILV…IILL), 313–335 (SLER…GNLH), 336–356 (LKFL…IINK), 400–421 (TLKI…VFDA), 426–447 (IITS…MVEL), 450–472 (MVSD…CVLQ), 473–494 (KLTF…VESL), 496–517 (RLQT…LYRI), 519–540 (TLET…KMKM), 543–564 (NLTT…LGNC), and 566–586 (NLRT…AILM).

The protein is Leucine-rich repeat-containing protein 40 (LRRC40) of Pongo abelii (Sumatran orangutan).